A 293-amino-acid chain; its full sequence is Diaminopimelate epimerase (293 aa).

Substrate is bound by residues N17, Q47, and N67. The active-site Proton donor is C76. Substrate-binding positions include 77-78, N164, N197, and 215-216; these read GN and ER. C224 functions as the Proton acceptor in the catalytic mechanism. 225–226 is a binding site for substrate; that stretch reads GS.

It belongs to the diaminopimelate epimerase family. As to quaternary structure, homodimer.

The protein resides in the cytoplasm. It catalyses the reaction (2S,6S)-2,6-diaminopimelate = meso-2,6-diaminopimelate. Its pathway is amino-acid biosynthesis; L-lysine biosynthesis via DAP pathway; DL-2,6-diaminopimelate from LL-2,6-diaminopimelate: step 1/1. In terms of biological role, catalyzes the stereoinversion of LL-2,6-diaminopimelate (L,L-DAP) to meso-diaminopimelate (meso-DAP), a precursor of L-lysine and an essential component of the bacterial peptidoglycan. The polypeptide is Diaminopimelate epimerase (Rhodopseudomonas palustris (strain ATCC BAA-98 / CGA009)).